Here is a 249-residue protein sequence, read N- to C-terminus: DNA repair protein RecO (249 aa).

It belongs to the RecO family.

Involved in DNA repair and RecF pathway recombination. The protein is DNA repair protein RecO of Mycoplasma mycoides subsp. mycoides SC (strain CCUG 32753 / NCTC 10114 / PG1).